Reading from the N-terminus, the 282-residue chain is Tyrosine recombinase XerA (282 aa).

A Core-binding (CB) domain is found at 2–79; sequence EAINEVIEEY…ALRSYFRFEG (78 aa). One can recognise a Tyr recombinase domain in the interval 95–271; it reads SLPKSLTREE…TVEHLRKAQE (177 aa). Catalysis depends on residues arginine 132, lysine 157, histidine 223, arginine 226, and histidine 249. Tyrosine 258 acts as the O-(3'-phospho-DNA)-tyrosine intermediate in catalysis.

The protein belongs to the 'phage' integrase family. XerA subfamily.

The protein localises to the cytoplasm. Site-specific tyrosine recombinase, which acts by catalyzing the cutting and rejoining of the recombining DNA molecules. The sequence is that of Tyrosine recombinase XerA from Thermococcus onnurineus (strain NA1).